The chain runs to 266 residues: tRNA pseudouridine synthase A (266 aa).

The active-site Nucleophile is the Asp-53. A substrate-binding site is contributed by Tyr-109.

This sequence belongs to the tRNA pseudouridine synthase TruA family.

The catalysed reaction is uridine(38/39/40) in tRNA = pseudouridine(38/39/40) in tRNA. Its function is as follows. Formation of pseudouridine at positions 38, 39 and 40 in the anticodon stem and loop of transfer RNAs. The polypeptide is tRNA pseudouridine synthase A (Methanocella arvoryzae (strain DSM 22066 / NBRC 105507 / MRE50)).